The chain runs to 246 residues: MFCASSSPITSPLYPKAYKFSQTKSNSKRFSSLRASLPVSDNKLLKFEYTPWLIVGLGNPGLKYYGTRHNIGFEMIDHIARATDISMNTIQSKALVGIGSVGEVPILLVKPQGYMNFSGESVGPLAAYYQIPLRHILMIYDDMGLSNGVLRLQPKGGHSQHNGLKNVTEHLNGCRGYPRLSIGIGNPPGNMDMKAFLLQKFSPLERKQMDEGLEQGVEGVKTLVEEGFSDSISRFNLGQKYKFHKV.

The transit peptide at 1–34 (MFCASSSPITSPLYPKAYKFSQTKSNSKRFSSLR) directs the protein to the chloroplast. A tRNA-binding site is contributed by Y64. Residue H69 is the Proton acceptor of the active site. TRNA contacts are provided by Y114, N116, and N162.

This sequence belongs to the PTH family. CRS2 subfamily. Part of large ribonucleo-protein complexes that include group IIB introns and either CAF1 or CAF2.

It localises to the plastid. It is found in the chloroplast stroma. In terms of biological role, required for the splicing of group IIB introns in chloroplasts. In Arabidopsis thaliana (Mouse-ear cress), this protein is Chloroplastic group IIB intron splicing facilitator CRS2-A, chloroplastic (CRS2A).